The sequence spans 269 residues: Undecaprenyl-diphosphatase (269 aa).

The next 8 membrane-spanning stretches (helical) occupy residues 4–24, 50–70, 86–106, 113–133, 146–166, 186–206, 220–240, and 246–266; these read IELW…WLPI, LWLH…PYWL, LFAI…YKVL, ATGD…GLLL, VNVV…IPGI, AVWL…ALEL, WMVT…EVLL, and LDFS…PLAA.

It belongs to the UppP family.

The protein localises to the cell membrane. The enzyme catalyses di-trans,octa-cis-undecaprenyl diphosphate + H2O = di-trans,octa-cis-undecaprenyl phosphate + phosphate + H(+). In terms of biological role, catalyzes the dephosphorylation of undecaprenyl diphosphate (UPP). The polypeptide is Undecaprenyl-diphosphatase (Methanopyrus kandleri (strain AV19 / DSM 6324 / JCM 9639 / NBRC 100938)).